Here is a 257-residue protein sequence, read N- to C-terminus: Type III pantothenate kinase (257 aa).

6–13 is a binding site for ATP; it reads EQGNTNTL. 107-110 contacts substrate; sequence GADR. D109 functions as the Proton acceptor in the catalytic mechanism. D129 serves as a coordination point for K(+). T132 lines the ATP pocket. Substrate is bound at residue T184.

It belongs to the type III pantothenate kinase family. Homodimer. The cofactor is NH4(+). It depends on K(+) as a cofactor.

It is found in the cytoplasm. It carries out the reaction (R)-pantothenate + ATP = (R)-4'-phosphopantothenate + ADP + H(+). It participates in cofactor biosynthesis; coenzyme A biosynthesis; CoA from (R)-pantothenate: step 1/5. In terms of biological role, catalyzes the phosphorylation of pantothenate (Pan), the first step in CoA biosynthesis. The protein is Type III pantothenate kinase of Phenylobacterium zucineum (strain HLK1).